The following is a 134-amino-acid chain: Profilin-1 (134 aa).

Residues Cys-13 and Cys-118 are joined by a disulfide bond. An Involved in PIP2 interaction motif is present at residues Ala-84 to Thr-100. Phosphothreonine is present on Thr-114.

Belongs to the profilin family. In terms of assembly, occurs in many kinds of cells as a complex with monomeric actin in a 1:1 ratio. Post-translationally, phosphorylated by MAP kinases.

It localises to the cytoplasm. The protein resides in the cytoskeleton. Functionally, binds to actin and affects the structure of the cytoskeleton. At high concentrations, profilin prevents the polymerization of actin, whereas it enhances it at low concentrations. The chain is Profilin-1 from Olea europaea (Common olive).